Consider the following 634-residue polypeptide: 1-deoxy-D-xylulose-5-phosphate synthase (634 aa).

Residues His73 and 114 to 116 (GHS) contribute to the thiamine diphosphate site. Residue Asp145 participates in Mg(2+) binding. Thiamine diphosphate is bound by residues 146–147 (GA), Asn174, Tyr285, and Glu365. Mg(2+) is bound at residue Asn174.

This sequence belongs to the transketolase family. DXPS subfamily. Homodimer. Mg(2+) serves as cofactor. The cofactor is thiamine diphosphate.

It carries out the reaction D-glyceraldehyde 3-phosphate + pyruvate + H(+) = 1-deoxy-D-xylulose 5-phosphate + CO2. The protein operates within metabolic intermediate biosynthesis; 1-deoxy-D-xylulose 5-phosphate biosynthesis; 1-deoxy-D-xylulose 5-phosphate from D-glyceraldehyde 3-phosphate and pyruvate: step 1/1. In terms of biological role, catalyzes the acyloin condensation reaction between C atoms 2 and 3 of pyruvate and glyceraldehyde 3-phosphate to yield 1-deoxy-D-xylulose-5-phosphate (DXP). This is 1-deoxy-D-xylulose-5-phosphate synthase from Desulforudis audaxviator (strain MP104C).